A 553-amino-acid polypeptide reads, in one-letter code: Undecaprenyl phosphate-alpha-4-amino-4-deoxy-L-arabinose arabinosyl transferase (553 aa).

11 consecutive transmembrane segments (helical) span residues 6-26 (ACKVGAFLMALFFVITYLLPL), 89-109 (FGSVFCIFISAILLYRLAMMM), 115-135 (IAFATSLIYISMFLVFAIGTY), 180-200 (FMTKGFLALAVPVIVMLPIVI), 208-228 (IVCFGPLAIISAIAISLPWVI), 258-278 (IAPFWYYIPILILGVIPWLGL), 293-313 (NPEMFFLLCWFVVPLLFFSIA), 317-337 (LPTYILPCMAPLAMMMAKFGV), 352-372 (GMVNVFLGLLAVIVLFAMEVV), 386-406 (WVLAIVAFGIWGIIGYLCFAL), and 410-430 (YWLLAAFCSIVVSLVIGHALP).

It belongs to the glycosyltransferase 83 family.

It localises to the cell inner membrane. The enzyme catalyses 4-amino-4-deoxy-alpha-L-arabinopyranosyl di-trans,octa-cis-undecaprenyl phosphate + lipid IVA = lipid IIA + di-trans,octa-cis-undecaprenyl phosphate.. The protein operates within lipopolysaccharide metabolism; 4-amino-4-deoxy-beta-L-arabinose-lipid A biosynthesis. Its function is as follows. Catalyzes the transfer of the L-Ara4N moiety of the glycolipid undecaprenyl phosphate-alpha-L-Ara4N to lipid A. The modified arabinose is attached to lipid A and is required for resistance to polymyxin and cationic antimicrobial peptides. This chain is Undecaprenyl phosphate-alpha-4-amino-4-deoxy-L-arabinose arabinosyl transferase (arnT), found in Photorhabdus laumondii subsp. laumondii (strain DSM 15139 / CIP 105565 / TT01) (Photorhabdus luminescens subsp. laumondii).